We begin with the raw amino-acid sequence, 209 residues long: Large ribosomal subunit protein uL3 (209 aa).

Residues 128 to 154 (QQRGPMTHGSKFHRAPGSMGASSDPSR) form a disordered region.

This sequence belongs to the universal ribosomal protein uL3 family. Part of the 50S ribosomal subunit. Forms a cluster with proteins L14 and L19.

One of the primary rRNA binding proteins, it binds directly near the 3'-end of the 23S rRNA, where it nucleates assembly of the 50S subunit. The polypeptide is Large ribosomal subunit protein uL3 (Clostridium beijerinckii (strain ATCC 51743 / NCIMB 8052) (Clostridium acetobutylicum)).